A 101-amino-acid chain; its full sequence is Small ribosomal subunit protein uS10 (101 aa).

The protein belongs to the universal ribosomal protein uS10 family. As to quaternary structure, part of the 30S ribosomal subunit.

In terms of biological role, involved in the binding of tRNA to the ribosomes. The polypeptide is Small ribosomal subunit protein uS10 (Brachyspira pilosicoli (Serpulina pilosicoli)).